Reading from the N-terminus, the 790-residue chain is Valine--tRNA ligase (790 aa).

A 'HIGH' region motif is present at residues 40–50 (PTVSGKMHMGH). A 'KMSKS' region motif is present at residues 521 to 525 (KMSKS). An ATP-binding site is contributed by K524.

Belongs to the class-I aminoacyl-tRNA synthetase family. ValS type 2 subfamily.

It localises to the cytoplasm. It carries out the reaction tRNA(Val) + L-valine + ATP = L-valyl-tRNA(Val) + AMP + diphosphate. Catalyzes the attachment of valine to tRNA(Val). As ValRS can inadvertently accommodate and process structurally similar amino acids such as threonine, to avoid such errors, it has a 'posttransfer' editing activity that hydrolyzes mischarged Thr-tRNA(Val) in a tRNA-dependent manner. This is Valine--tRNA ligase from Thermoplasma volcanium (strain ATCC 51530 / DSM 4299 / JCM 9571 / NBRC 15438 / GSS1).